The chain runs to 513 residues: 2-isopropylmalate synthase (513 aa).

Positions 4 to 268 (IKIFDTTLRD…ETGIRTELIY (265 aa)) constitute a Pyruvate carboxyltransferase domain. Mn(2+) is bound by residues aspartate 13, histidine 203, histidine 205, and asparagine 239. A regulatory domain region spans residues 392–513 (RLVHFHVHTG…GLLRKNGGVE (122 aa)).

This sequence belongs to the alpha-IPM synthase/homocitrate synthase family. LeuA type 1 subfamily. As to quaternary structure, homodimer. It depends on Mn(2+) as a cofactor.

The protein localises to the cytoplasm. It catalyses the reaction 3-methyl-2-oxobutanoate + acetyl-CoA + H2O = (2S)-2-isopropylmalate + CoA + H(+). Its pathway is amino-acid biosynthesis; L-leucine biosynthesis; L-leucine from 3-methyl-2-oxobutanoate: step 1/4. In terms of biological role, catalyzes the condensation of the acetyl group of acetyl-CoA with 3-methyl-2-oxobutanoate (2-ketoisovalerate) to form 3-carboxy-3-hydroxy-4-methylpentanoate (2-isopropylmalate). The sequence is that of 2-isopropylmalate synthase from Thermotoga neapolitana (strain ATCC 49049 / DSM 4359 / NBRC 107923 / NS-E).